The following is a 358-amino-acid chain: Protein-glutamate methylesterase/protein-glutamine glutaminase 1 (358 aa).

The region spanning 8-125 is the Response regulatory domain; the sequence is RVLIVDDSAV…ARGLEGYAEE (118 aa). D59 carries the 4-aspartylphosphate modification. Positions 165–352 constitute a CheB-type methylesterase domain; the sequence is FRTTDRLIAI…LDRVAERLLA (188 aa). Residues S177, H203, and D299 contribute to the active site.

Belongs to the CheB family. Phosphorylated by CheA. Phosphorylation of the N-terminal regulatory domain activates the methylesterase activity.

Its subcellular location is the cytoplasm. The catalysed reaction is [protein]-L-glutamate 5-O-methyl ester + H2O = L-glutamyl-[protein] + methanol + H(+). It catalyses the reaction L-glutaminyl-[protein] + H2O = L-glutamyl-[protein] + NH4(+). Involved in chemotaxis. Part of a chemotaxis signal transduction system that modulates chemotaxis in response to various stimuli. Catalyzes the demethylation of specific methylglutamate residues introduced into the chemoreceptors (methyl-accepting chemotaxis proteins or MCP) by CheR. Also mediates the irreversible deamidation of specific glutamine residues to glutamic acid. This Xanthomonas axonopodis pv. citri (strain 306) protein is Protein-glutamate methylesterase/protein-glutamine glutaminase 1.